Consider the following 827-residue polypeptide: Periplasmic nitrate reductase (827 aa).

The tat-type signal signal peptide spans 1–32 (MNLSRRDFMKANAALAAASVAGLIIPVKNVNA). A 4Fe-4S Mo/W bis-MGD-type domain is found at 37 to 93 (ITWDKAVCRFCGTGCAVLVGTKDGRVVASQGDPDAEVNRGLNCIKGYFLPKIMYGKD). [4Fe-4S] cluster contacts are provided by Cys44, Cys47, Cys51, and Cys79. Mo-bis(molybdopterin guanine dinucleotide) is bound by residues Lys81, Gln148, Asn173, Cys177, 210–217 (WGSNMAEM), 242–246 (STFEH), 261–263 (QSD), Met372, Gln376, Asn482, 508–509 (SD), Lys531, Asp558, and 717–726 (TGRILEHWHT). Phe793 is a substrate binding site. Residues Asn801 and Lys818 each coordinate Mo-bis(molybdopterin guanine dinucleotide).

It belongs to the prokaryotic molybdopterin-containing oxidoreductase family. NasA/NapA/NarB subfamily. In terms of assembly, component of the periplasmic nitrate reductase NapAB complex composed of NapA and NapB. [4Fe-4S] cluster serves as cofactor. Mo-bis(molybdopterin guanine dinucleotide) is required as a cofactor. Predicted to be exported by the Tat system. The position of the signal peptide cleavage has not been experimentally proven.

The protein localises to the periplasm. It catalyses the reaction 2 Fe(II)-[cytochrome] + nitrate + 2 H(+) = 2 Fe(III)-[cytochrome] + nitrite + H2O. Its function is as follows. Catalytic subunit of the periplasmic nitrate reductase complex NapAB. Receives electrons from NapB and catalyzes the reduction of nitrate to nitrite. This chain is Periplasmic nitrate reductase, found in Histophilus somni (strain 2336) (Haemophilus somnus).